Consider the following 132-residue polypeptide: Small ribosomal subunit protein uS8 (132 aa).

The protein belongs to the universal ribosomal protein uS8 family. Part of the 30S ribosomal subunit. Contacts proteins S5 and S12.

Functionally, one of the primary rRNA binding proteins, it binds directly to 16S rRNA central domain where it helps coordinate assembly of the platform of the 30S subunit. In Streptomyces griseus subsp. griseus (strain JCM 4626 / CBS 651.72 / NBRC 13350 / KCC S-0626 / ISP 5235), this protein is Small ribosomal subunit protein uS8.